The chain runs to 214 residues: Adenylate kinase (214 aa).

10–15 (GAGKGT) is a binding site for ATP. The segment at 30 to 59 (STGDMFREEISAKSELGRKVEDILKRGELV) is NMP. AMP is bound by residues Thr31, Arg36, 57-59 (ELV), 85-88 (GYPR), and Gln92. Residues 126-163 (NRRICKNCGKIYNLITLPPKINGKCDVCGGELYQREDD) form an LID region. Arg127 is a binding site for ATP. 2 residues coordinate Zn(2+): Cys130 and Cys133. 136 to 137 (IY) contacts ATP. Zn(2+)-binding residues include Cys150 and Cys153. Residues Arg160 and Arg171 each contribute to the AMP site. Met199 contacts ATP.

Belongs to the adenylate kinase family. Monomer.

The protein resides in the cytoplasm. It catalyses the reaction AMP + ATP = 2 ADP. It participates in purine metabolism; AMP biosynthesis via salvage pathway; AMP from ADP: step 1/1. In terms of biological role, catalyzes the reversible transfer of the terminal phosphate group between ATP and AMP. Plays an important role in cellular energy homeostasis and in adenine nucleotide metabolism. This is Adenylate kinase from Thermosipho melanesiensis (strain DSM 12029 / CIP 104789 / BI429).